Reading from the N-terminus, the 453-residue chain is Cholecystokinin receptor (453 aa).

The Extracellular portion of the chain corresponds to 1 to 64; it reads MESLRSLSNI…ILDRKKPSPS (64 aa). 5 N-linked (GlcNAc...) asparagine glycosylation sites follow: N9, N22, N30, N35, and N39. The helical transmembrane segment at 65–94 threads the bilayer; it reads DLNLWVRIVMYSVIFLLSVFGNTLIIIVLV. Residues 95 to 104 lie on the Cytoplasmic side of the membrane; the sequence is MNKRLRTITN. A helical membrane pass occupies residues 105 to 131; sequence SFLLSLALSDLMVAVLCMPFTLIPNLM. The Extracellular portion of the chain corresponds to 132–142; it reads ENFIFGEVICR. C141 and C223 are joined by a disulfide. A helical membrane pass occupies residues 143–164; the sequence is AAAYFMGLSVSVSTFNLVAISI. The Cytoplasmic segment spans residues 165–184; sequence ERYSAICNPLKSRVWQTRSH. A helical membrane pass occupies residues 185–205; it reads AYRVIAATWVLSSIIMIPYLV. Residues 206 to 237 are Extracellular-facing; that stretch reads YNKTVTFPMKDRRVGHQCRLVWPSKQVQQAWY. The chain crosses the membrane as a helical span at residues 238-261; the sequence is VLLLTILFFIPGVVMIVAYGLISR. Residues 262–343 are Cytoplasmic-facing; the sequence is ELYRGIQFEM…KLMAKKRVIR (82 aa). The helical transmembrane segment at 344-364 threads the bilayer; it reads MLIVIVAMFFICWMPIFVANT. Residues 365–379 lie on the Extracellular side of the membrane; the sequence is WKAFDELSAFNTLTG. A helical membrane pass occupies residues 380-403; that stretch reads APISFIHLLSYTSACVNPLIYCFM. A lipid anchor (S-palmitoyl cysteine) is attached at C401. Topologically, residues 404–453 are cytoplasmic; the sequence is NKRFRKAFLGTFSSCIKPCRNFRDTDEDIAATGASLSKFSYTTVSSLGPA.

This sequence belongs to the G-protein coupled receptor 1 family. As to expression, brain and stomach.

It is found in the cell membrane. Receptor for cholecystokinin. This receptor mediates its action by association with G proteins that activate a phosphatidylinositol-calcium second messenger system. Has high affinity for CCK-8 and low affinities for gastrin-17-I, CCK-4, and unsulfated CCK-8. The sequence is that of Cholecystokinin receptor (cckar) from Xenopus laevis (African clawed frog).